A 227-amino-acid chain; its full sequence is Cytochrome c oxidase subunit 2 (227 aa).

At 1 to 14 the chain is on the mitochondrial intermembrane side; that stretch reads MAYPFQLGLQDATS. A helical membrane pass occupies residues 15–45; it reads PIMEELLHFHDHTLMIVFLISSLVLYIISLM. At 46–59 the chain is on the mitochondrial matrix side; it reads LTTKLTHTSTMDAQ. A helical membrane pass occupies residues 60 to 87; sequence EVETVWTILPAIILILIALPSLRILYMM. The Mitochondrial intermembrane segment spans residues 88–227; the sequence is DEINNPSLTV…YFETWSAVMV (140 aa). Cu cation-binding residues include H161, C196, E198, C200, H204, and M207. E198 is a Mg(2+) binding site. Y218 carries the post-translational modification Phosphotyrosine.

Belongs to the cytochrome c oxidase subunit 2 family. As to quaternary structure, component of the cytochrome c oxidase (complex IV, CIV), a multisubunit enzyme composed of 14 subunits. The complex is composed of a catalytic core of 3 subunits MT-CO1, MT-CO2 and MT-CO3, encoded in the mitochondrial DNA, and 11 supernumerary subunits COX4I, COX5A, COX5B, COX6A, COX6B, COX6C, COX7A, COX7B, COX7C, COX8 and NDUFA4, which are encoded in the nuclear genome. The complex exists as a monomer or a dimer and forms supercomplexes (SCs) in the inner mitochondrial membrane with NADH-ubiquinone oxidoreductase (complex I, CI) and ubiquinol-cytochrome c oxidoreductase (cytochrome b-c1 complex, complex III, CIII), resulting in different assemblies (supercomplex SCI(1)III(2)IV(1) and megacomplex MCI(2)III(2)IV(2)). Found in a complex with TMEM177, COA6, COX18, COX20, SCO1 and SCO2. Interacts with TMEM177 in a COX20-dependent manner. Interacts with COX20. Interacts with COX16. Cu cation is required as a cofactor.

The protein localises to the mitochondrion inner membrane. The enzyme catalyses 4 Fe(II)-[cytochrome c] + O2 + 8 H(+)(in) = 4 Fe(III)-[cytochrome c] + 2 H2O + 4 H(+)(out). Its function is as follows. Component of the cytochrome c oxidase, the last enzyme in the mitochondrial electron transport chain which drives oxidative phosphorylation. The respiratory chain contains 3 multisubunit complexes succinate dehydrogenase (complex II, CII), ubiquinol-cytochrome c oxidoreductase (cytochrome b-c1 complex, complex III, CIII) and cytochrome c oxidase (complex IV, CIV), that cooperate to transfer electrons derived from NADH and succinate to molecular oxygen, creating an electrochemical gradient over the inner membrane that drives transmembrane transport and the ATP synthase. Cytochrome c oxidase is the component of the respiratory chain that catalyzes the reduction of oxygen to water. Electrons originating from reduced cytochrome c in the intermembrane space (IMS) are transferred via the dinuclear copper A center (CU(A)) of subunit 2 and heme A of subunit 1 to the active site in subunit 1, a binuclear center (BNC) formed by heme A3 and copper B (CU(B)). The BNC reduces molecular oxygen to 2 water molecules using 4 electrons from cytochrome c in the IMS and 4 protons from the mitochondrial matrix. This chain is Cytochrome c oxidase subunit 2 (MT-CO2), found in Lycalopex sechurae (Sechuran desert fox).